The sequence spans 166 residues: Glutamyl-tRNA(Gln) amidotransferase subunit C, mitochondrial (166 aa).

The N-terminal 44 residues, Met-1–Tyr-44, are a transit peptide targeting the mitochondrion.

Belongs to the GatC family. In terms of assembly, subunit of the heterotrimeric GatCAB amidotransferase (AdT) complex, composed of A, B and C subunits.

It localises to the mitochondrion. It carries out the reaction L-glutamyl-tRNA(Gln) + L-glutamine + ATP + H2O = L-glutaminyl-tRNA(Gln) + L-glutamate + ADP + phosphate + H(+). Allows the formation of correctly charged Gln-tRNA(Gln) through the transamidation of misacylated Glu-tRNA(Gln) in the mitochondria. The reaction takes place in the presence of glutamine and ATP through an activated gamma-phospho-Glu-tRNA(Gln). The protein is Glutamyl-tRNA(Gln) amidotransferase subunit C, mitochondrial of Anopheles darlingi (Mosquito).